The following is a 458-amino-acid chain: Argininosuccinate lyase (458 aa).

It belongs to the lyase 1 family. Argininosuccinate lyase subfamily.

The protein localises to the cytoplasm. The catalysed reaction is 2-(N(omega)-L-arginino)succinate = fumarate + L-arginine. It functions in the pathway amino-acid biosynthesis; L-arginine biosynthesis; L-arginine from L-ornithine and carbamoyl phosphate: step 3/3. The sequence is that of Argininosuccinate lyase from Salmonella newport (strain SL254).